The following is a 354-amino-acid chain: GRAM domain-containing protein 2A (354 aa).

The segment covering 1 to 29 (MTALSRSEATEEGGNQQMHRKTASLNSPV) has biased composition (polar residues). A disordered region spans residues 1 to 46 (MTALSRSEATEEGGNQQMHRKTASLNSPVSCKEKPDRVEEPPDYSL). Residues 31–40 (CKEKPDRVEE) show a composition bias toward basic and acidic residues. The GRAM domain maps to 72–139 (QQYHKLFKDV…VSVQMIKKHK (68 aa)). The helical transmembrane segment at 312 to 332 (LLKVFFVLICFLVMSSSYLAF) threads the bilayer.

Its subcellular location is the endoplasmic reticulum membrane. It localises to the cell membrane. In terms of biological role, participates in the organization of endoplasmic reticulum-plasma membrane contact sites (EPCS) with pleiotropic functions including STIM1 recruitment and calcium homeostasis. Constitutive tether that co-localize with ESYT2/3 tethers at endoplasmic reticulum-plasma membrane contact sites in a phosphatidylinositol lipid-dependent manner. Pre-marks the subset of phosphtidylinositol 4,5-biphosphate (PI(4,5)P2)-enriched EPCS destined for the store operated calcium entry pathway (SOCE). The polypeptide is GRAM domain-containing protein 2A (Homo sapiens (Human)).